We begin with the raw amino-acid sequence, 809 residues long: H(+)/Cl(-) exchange transporter 7 (809 aa).

The Cytoplasmic portion of the chain corresponds to 1 to 130 (MANVSKKVSW…TAFRTVEIKR (130 aa)). Serine 9 and serine 64 each carry phosphoserine. Helical transmembrane passes span 131–163 (WVIC…YRLV) and 178–201 (FSLL…VAFI). The Selectivity filter part_1 signature appears at 207–211 (GSGIP). Position 208 (serine 208) interacts with chloride. Residues 210–217 (IPQIKCFL) constitute an intramembrane region (helical). The next 2 membrane-spanning stretches (helical) occupy residues 227–245 (RLKT…VVGG) and 251–268 (EGPM…ISQG). The short motif at 249-253 (GKEGP) is the Selectivity filter part_2 element. 2 consecutive intramembrane regions (helical) follow at residues 292–304 (FVSA…VSAA) and 308–316 (PVGGVLFSL). 5 helical membrane passes run 326–345 (FLTW…LNFV), 379–409 (IPIF…FRIR), 414–436 (PCLQ…FVLI), 491–511 (PMTL…TYGL), and 516–539 (GVFI…LSYI). Positions 516–520 (GVFIP) match the Selectivity filter part_3 motif. Phenylalanine 518 contacts chloride. The segment at residues 549–563 (GKYALMGAAAQLGGI) is an intramembrane region (helical). The segment at residues 564–566 (VRM) is an intramembrane region (note=Loop between two helices). An intramembrane region (helical) is located at residues 567 to 578 (TLSLTVIMMEAT). An intramembrane region (note=Loop between two helices) is located at residues 579–582 (SSVT). A helical membrane pass occupies residues 583 to 601 (YGFPIMLVLMTAKIVGDVF). Residues 602–809 (IEGLYDMHIQ…GLEELSLAQT (208 aa)) are Cytoplasmic-facing. A chloride-binding site is contributed by tyrosine 606. CBS domains are found at residues 635–699 (MSTP…VFVE) and 745–803 (MNPS…GLEE). ATP-binding positions include 662–664 (HNG) and 787–790 (TRKD). Serine 805 carries the phosphoserine modification.

This sequence belongs to the chloride channel (TC 2.A.49) family. ClC-7/CLCN7 subfamily. In terms of assembly, chloride channel 7 are heteromers of alpha (CLCN7) and beta (OSTM1) subunits.

It is found in the lysosome membrane. The enzyme catalyses 2 chloride(in) + H(+)(out) = 2 chloride(out) + H(+)(in). Functionally, slowly voltage-gated channel mediating the exchange of chloride ions against protons. Functions as antiporter and contributes to the acidification of the lysosome lumen and may be involved in maintaining lysosomal pH. The CLC channel family contains both chloride channels and proton-coupled anion transporters that exchange chloride or another anion for protons. The presence of conserved gating glutamate residues is typical for family members that function as antiporters. This is H(+)/Cl(-) exchange transporter 7 (CLCN7) from Bos taurus (Bovine).